The following is a 56-amino-acid chain: Conotoxin Cal6.41b (56 aa).

An N-terminal signal peptide occupies residues 1 to 23 (MSGSGAMLLGLLILVAMATSLDT). 3 cysteine pairs are disulfide-bonded: C27–C41, C33–C50, and C40–C54.

In terms of tissue distribution, expressed by the venom duct.

It localises to the secreted. In terms of biological role, probable neurotoxin. This is Conotoxin Cal6.41b from Californiconus californicus (California cone).